The following is a 423-amino-acid chain: Sphingomyelin phosphodiesterase 2 (423 aa).

Glu49 lines the Mg(2+) pocket. His272 functions as the Proton acceptor in the catalytic mechanism. 2 helical membrane passes run 330–350 and 354–374; these read VIGL…GGGA and AILL…FYLF. The segment at 400 to 423 is disordered; it reads QDLGPEPQPALLLGQQEGDRTKEQ.

This sequence belongs to the neutral sphingomyelinase family. Mg(2+) is required as a cofactor.

It is found in the cell membrane. It carries out the reaction a sphingomyelin + H2O = phosphocholine + an N-acylsphing-4-enine + H(+). The enzyme catalyses an N-(acyl)-sphingosylphosphocholine + H2O = an N-acyl-sphingoid base + phosphocholine + H(+). It catalyses the reaction 1-O-octadecyl-sn-glycero-3-phosphocholine + H2O = 1-O-octadecyl-sn-glycerol + phosphocholine + H(+). The catalysed reaction is 1-O-hexadecyl-sn-glycero-3-phosphocholine + H2O = 1-O-hexadecyl-sn-glycerol + phosphocholine + H(+). It carries out the reaction 1-hexadecanoyl-sn-glycero-3-phosphocholine + H2O = 1-hexadecanoyl-sn-glycerol + phosphocholine + H(+). The enzyme catalyses a sphingosylphosphocholine + H2O = a sphingoid base + phosphocholine + H(+). The protein operates within lipid metabolism; sphingolipid metabolism. Its function is as follows. Catalyzes, at least in vitro, the hydrolysis of sphingomyelin to form ceramide and phosphocholine. Also hydrolyzes 1-O-alkyl-2-lyso-sn-glycero-3-phosphocholine (lyso-platelet-activating factor) in vivo. Also acts on 1-acyl-2-lyso-sn-glycero-3-phosphocholine (lyso-PC) and sphingosylphosphocholine. This Homo sapiens (Human) protein is Sphingomyelin phosphodiesterase 2.